The chain runs to 510 residues: Myosin-binding protein C, cardiac-type (510 aa).

3 Ig-like C2-type domains span residues K177–P269, P270–T347, and R378–P438.

The protein belongs to the immunoglobulin superfamily. MyBP family. Heart.

Its function is as follows. Thick filament-associated protein located in the crossbridge region of vertebrate striated muscle a bands. In vitro it binds MHC, F-actin and native thin filaments, and modifies the activity of actin-activated myosin ATPase. It may modulate muscle contraction or may play a more structural role. In Ambystoma mexicanum (Axolotl), this protein is Myosin-binding protein C, cardiac-type.